The following is a 373-amino-acid chain: MHNAAPITRRKSTRIYVGKVPVGDGAPIAVQSMTNTRTTDVEATVNQIKALERVGVDIVRVSVPTMDAAEAFKLIKQQVNVPLVADIHFDYRIALKVAEYGVDCLRINPGNIGNEERIRSVVDCARYYNIPIRIGVNGGSLEKDIQEKYGEPTPEALLESAMRHVDILDRLNFDQFKVSVKASDVFLAVQSYRLLAARIDQPLHLGITEAGGARSGAVKSAIGLGLLLSEGIGDTLRISLAADPVEEVKVGFDILKSLRIRARGINFIACPTCSRQEFDVIGTVNALEQRLEDLITPMDVSIIGCVVNGPGEALVSTIGVTGGHNKSGFYEDGVRQRERFDNEQMIDQLEAKIRAKASMMDESQRITVNLVDK.

4 residues coordinate [4Fe-4S] cluster: cysteine 270, cysteine 273, cysteine 305, and glutamate 312.

The protein belongs to the IspG family. It depends on [4Fe-4S] cluster as a cofactor.

It catalyses the reaction (2E)-4-hydroxy-3-methylbut-2-enyl diphosphate + oxidized [flavodoxin] + H2O + 2 H(+) = 2-C-methyl-D-erythritol 2,4-cyclic diphosphate + reduced [flavodoxin]. It participates in isoprenoid biosynthesis; isopentenyl diphosphate biosynthesis via DXP pathway; isopentenyl diphosphate from 1-deoxy-D-xylulose 5-phosphate: step 5/6. Functionally, converts 2C-methyl-D-erythritol 2,4-cyclodiphosphate (ME-2,4cPP) into 1-hydroxy-2-methyl-2-(E)-butenyl 4-diphosphate. The protein is 4-hydroxy-3-methylbut-2-en-1-yl diphosphate synthase (flavodoxin) of Pectobacterium atrosepticum (strain SCRI 1043 / ATCC BAA-672) (Erwinia carotovora subsp. atroseptica).